The chain runs to 111 residues: uncharacterized protein (111 aa).

Positions 8 to 111 constitute an HIT domain; sequence LFLKIIKREE…HVHIIPYYKK (104 aa). The Histidine triad motif motif lies at 100–104; sequence HTHVH.

This is an uncharacterized protein from Mesomycoplasma hyorhinis (Mycoplasma hyorhinis).